Consider the following 550-residue polypeptide: MDMDNQNTKIYTDKFLAVTSLLFVFISVAGLAIYSQESIKIAATWMQWTTSVFTTPVLLFAFLAIIFTFGLAFSKYGKIKLGEGKPQYSTMSWIFMFILSGIGSSTLYWGFLDWAYYYQTPGLSLPPESAEALKYSVAYSFFHSGLSAWAIYALASISLCYSYHVRKNKGLSLASVIEAVTGFKSTGVVGRLVDLMFLLCMFGALTISLVLTAVTFTNILSQLTGIPNTFMTKVIIILAVSVLFALSSYVGMDKGMQRLSHMVCLGVVLFAIYVLCFGPTQFILNNSLMSFGLMATNFVDMSLFTDPMGDGKFTREWTVFYWLWWISYAPGVALFVTRVSKGRTIKEVIFAMVIGGSVGLWFIFGVFENYSVYSFIHGAVNVPQILSQQGGEVAIGQLLSLLPAGKLMMWIFLGIMVVFLAAHMDAVGYAVSATCTRGLSEGQDPSPNARLFWCVMLTLVPIAMIFSKAPLDTMKTATIVTALPFIVIILIQTYGLVKWLIQDYAKVPSHLIEQQGYDDQEIGLNQTQDEHAKRMQLELASSIKLDRKTS.

Helical transmembrane passes span 15-35 (FLAVTSLLFVFISVAGLAIYS), 53-73 (FTTPVLLFAFLAIIFTFGLAF), 92-112 (SWIFMFILSGIGSSTLYWGFL), 137-157 (VAYSFFHSGLSAWAIYALASI), 196-216 (MFLLCMFGALTISLVLTAVTF), 230-250 (FMTKVIIILAVSVLFALSSYV), 263-283 (VCLGVVLFAIYVLCFGPTQFI), 317-337 (WTVFYWLWWISYAPGVALFVT), 347-367 (EVIFAMVIGGSVGLWFIFGVF), 401-421 (LLPAGKLMMWIFLGIMVVFLA), 451-471 (LFWCVMLTLVPIAMIFSKAPL), and 477-497 (ATIVTALPFIVIILIQTYGLV).

It belongs to the BCCT transporter (TC 2.A.15) family.

Its subcellular location is the cell inner membrane. Inhibited by the protonophore 3,3',4',5-tetrachlorosalicylanilide (TCS). Not activated by osmolarity. Its function is as follows. Catalyzes the energy-dependent uptake of carnitine and is essential for growth on carnitine. Can also mediate the uptake of choline. Is probably a proton:substrate symporter. This chain is Carnitine transporter, found in Acinetobacter baumannii (strain ATCC 19606 / DSM 30007 / JCM 6841 / CCUG 19606 / CIP 70.34 / NBRC 109757 / NCIMB 12457 / NCTC 12156 / 81).